Reading from the N-terminus, the 323-residue chain is Ubiquinone biosynthesis protein COQ4, mitochondrial (323 aa).

Zn(2+) is bound by residues histidine 205, aspartate 206, histidine 209, and glutamate 221.

Belongs to the COQ4 family. As to quaternary structure, component of a multi-subunit COQ enzyme complex, composed of at least COQ3, COQ4, COQ5, COQ6, COQ7 and COQ9. It depends on Zn(2+) as a cofactor.

The protein localises to the mitochondrion inner membrane. The enzyme catalyses a 4-hydroxy-3-methoxy-5-(all-trans-polyprenyl)benzoate + H(+) = a 2-methoxy-6-(all-trans-polyprenyl)phenol + CO2. Its pathway is cofactor biosynthesis; ubiquinone biosynthesis. Lyase that catalyzes the C1-decarboxylation of 4-hydroxy-3-methoxy-5-(all-trans-polyprenyl)benzoic acid into 2-methoxy-6-(all-trans-polyprenyl)phenol during ubiquinone biosynthesis. This chain is Ubiquinone biosynthesis protein COQ4, mitochondrial, found in Candida albicans (strain SC5314 / ATCC MYA-2876) (Yeast).